The primary structure comprises 313 residues: Porphobilinogen deaminase (313 aa).

The residue at position 243 (Cys243) is an S-(dipyrrolylmethanemethyl)cysteine.

The protein belongs to the HMBS family. Monomer. The cofactor is dipyrromethane.

The enzyme catalyses 4 porphobilinogen + H2O = hydroxymethylbilane + 4 NH4(+). The protein operates within porphyrin-containing compound metabolism; protoporphyrin-IX biosynthesis; coproporphyrinogen-III from 5-aminolevulinate: step 2/4. In terms of biological role, tetrapolymerization of the monopyrrole PBG into the hydroxymethylbilane pre-uroporphyrinogen in several discrete steps. The polypeptide is Porphobilinogen deaminase (Bordetella petrii (strain ATCC BAA-461 / DSM 12804 / CCUG 43448)).